The following is a 499-amino-acid chain: Potassium voltage-gated channel subfamily A member 2 (499 aa).

Residues 1-26 (MTVATGDPVDEAAALPGHPQDTYDPE) are disordered. Residues 1–125 (MTVATGDPVD…YELGEEAMEM (125 aa)) are tetramerization domain. Over 1–160 (MTVATGDPVD…LLFEYPESSG (160 aa)) the chain is Cytoplasmic. The helical transmembrane segment at 161 to 182 (PARIIAIVSVMVILISIVSFCL) threads the bilayer. At 183 to 221 (ETLPIFRDENEDMHGGGVTFHTYSNSTIGYQQSTSFTDP) the chain is on the extracellular side. An N-linked (GlcNAc...) asparagine glycan is attached at asparagine 207. A helical membrane pass occupies residues 222–243 (FFIVETLCIIWFSFEFLVRFFA). A lipid anchor (S-palmitoyl cysteine) is attached at cysteine 244. Residues 244–254 (CPSKAGFFTNI) are Cytoplasmic-facing. Residues 255–275 (MNIIDIVAIIPYFITLGTELA) traverse the membrane as a helical segment. At 276–289 (EKPEDAQQGQQAMS) the chain is on the extracellular side. A helical; Voltage-sensor transmembrane segment spans residues 290–310 (LAILRVIRLVRVFRIFKLSRH). Over 311–325 (SKGLQILGQTLKASM) the chain is Cytoplasmic. The tract at residues 312–325 (KGLQILGQTLKASM) is S4-S5 linker. Residues 326 to 347 (RELGLLIFFLFIGVILFSSAVY) traverse the membrane as a helical segment. Residues 348-361 (FAEADERDSQFPSI) lie on the Extracellular side of the membrane. Positions 362–373 (PDAFWWAVVSMT) form an intramembrane region, helical. The Selectivity filter signature appears at 374-379 (TVGYGD). An intramembrane segment occupies 374–381 (TVGYGDMV). The Extracellular segment spans residues 382-388 (PTTIGGK). A helical membrane pass occupies residues 389 to 417 (IVGSLCAIAGVLTIALPVPVIVSNFNYFY). Residues 418 to 499 (HRETEGEEQA…VNITKMLTDV (82 aa)) lie on the Cytoplasmic side of the membrane. Position 429 is a phosphotyrosine (tyrosine 429). 4 positions are modified to phosphoserine: serine 434, serine 440, serine 441, and serine 449. The residue at position 458 (tyrosine 458) is a Phosphotyrosine. Serine 468 is subject to Phosphoserine. The PDZ-binding signature appears at 497–499 (TDV).

Belongs to the potassium channel family. A (Shaker) (TC 1.A.1.2) subfamily. Kv1.2/KCNA2 sub-subfamily. In terms of assembly, homotetramer and heterotetramer with other channel-forming alpha subunits, such as KCNA1, KCNA4, KCNA5, KCNA6 and KCNA7. Channel activity is regulated by interaction with beta subunits, including KCNAB1 and KCNAB2. Identified in a complex with KCNA1 and KCNAB2. Identified in a complex with KCNA5 and KCNAB1. Identified in a complex with KCNA4 and FYN. Interacts with PTK2B. Interacts (via C-terminus) with CTTN. Interacts with ADAM22. Interacts with CNTNAP2. Interacts (via C-terminus) with the PDZ domains of DLG1, DLG2 and DLG4. Interacts (via N-terminal cytoplasmic domain) with RHOA (GTP-bound form); this regulates channel activity by reducing location at the cell surface in response to CHRM1 activation. Interacts with DRD2. Interacts with SIGMAR1; cocaine consumption leads to increased interaction. Interacts with ADAM11. Interacts with LYNX1. In terms of processing, phosphorylated on tyrosine residues; phosphorylation increases in response to ischemia. Phosphorylated on tyrosine residues by activated PTK2B/PYK2. Phosphorylation on tyrosine residues suppresses ion channel activity. Phosphorylated on tyrosine residues in response to CHRM1 activation; this abolishes interaction with CTTN. This is probably due to endocytosis of the phosphorylated channel subunits. Phosphorylated on serine residues in response to increased cAMP levels; phosphorylation is apparently not catalyzed by PKA. N-glycosylated, with complex, sialylated N-glycans. In terms of tissue distribution, detected in brain. Detected in cerebellum. Detected in mitral cells in the olfactory bulb. Detected in cochlea. Detected in cerebellum, particularly in the basket cell axon plexus and in the terminal regions around Purkinje cells (at protein level). Detected in juxtaparanodal regions in sciatic nerve. Detected in Schwann cells from sciatic nerve. Detected in dopamine neurons in substantia nigra. Detected in large myelinated fibers in juxtaparanodes in the CA3 and CA1 areas of the hippocampus. Detected in brain, in punctae on fiber tracts in brain stem and spinal cord, and on axons in the juxtaparanodal regions of the node of Ranvier (at protein level). Detected in dopamine neurons in the midbrain.

Its subcellular location is the cell membrane. The protein localises to the membrane. It is found in the cell projection. It localises to the axon. The protein resides in the synapse. Its subcellular location is the endoplasmic reticulum membrane. The protein localises to the lamellipodium membrane. It is found in the synaptosome. It localises to the presynaptic cell membrane. The protein resides in the dendrite. Its subcellular location is the perikaryon. The protein localises to the cell junction. It is found in the paranodal septate junction. It catalyses the reaction K(+)(in) = K(+)(out). With respect to regulation, inhibited by 4-aminopyridine (4-AP), dendrotoxin (DTX) and charybdotoxin (CTX), but not by tetraethylammonium (TEA). Inhibited by tityustoxin-K alpha (TsTX-Kalpha), a toxin that is highly specific for KCNA2. Inhibited by maurotoxin. Inhibited by kappaM conotoxins kappaM-RIIIJ and kappaM-RIIIK. Functionally, voltage-gated potassium channel that mediates transmembrane potassium transport in excitable membranes, primarily in the brain and the central nervous system, but also in the cardiovascular system. Prevents aberrant action potential firing and regulates neuronal output. Forms tetrameric potassium-selective channels through which potassium ions pass in accordance with their electrochemical gradient. The channel alternates between opened and closed conformations in response to the voltage difference across the membrane. Can form functional homotetrameric channels and heterotetrameric channels that contain variable proportions of KCNA1, KCNA2, KCNA4, KCNA5, KCNA6, KCNA7, and possibly other family members as well; channel properties depend on the type of alpha subunits that are part of the channel. Channel properties are modulated by cytoplasmic beta subunits that regulate the subcellular location of the alpha subunits and promote rapid inactivation of delayed rectifier potassium channels. In vivo, membranes probably contain a mixture of heteromeric potassium channel complexes, making it difficult to assign currents observed in intact tissues to any particular potassium channel family member. Homotetrameric KCNA2 forms a delayed-rectifier potassium channel that opens in response to membrane depolarization, followed by slow spontaneous channel closure. In contrast, a heteromultimer formed by KCNA2 and KCNA4 shows rapid inactivation. Contributes to the regulation of action potentials in neurons. KCNA2-containing channels play a presynaptic role and prevent hyperexcitability and aberrant action potential firing. Response to toxins that are selective for KCNA1, respectively for KCNA2, suggests that heteromeric potassium channels composed of both KCNA1 and KCNA2 play a role in pacemaking and regulate the output of deep cerebellar nuclear neurons. Response to toxins that are selective for KCNA2-containing potassium channels suggests that in Purkinje cells, dendritic subthreshold KCNA2-containing potassium channels prevent random spontaneous calcium spikes, suppressing dendritic hyperexcitability without hindering the generation of somatic action potentials, and thereby play an important role in motor coordination. KCNA2-containing channels play a role in GABAergic transmission from basket cells to Purkinje cells in the cerebellum, and thereby play an import role in motor coordination. Plays a role in the induction of long-term potentiation of neuron excitability in the CA3 layer of the hippocampus. May function as down-stream effector for G protein-coupled receptors and inhibit GABAergic inputs to basolateral amygdala neurons. May contribute to the regulation of neurotransmitter release, such as gamma-aminobutyric acid (GABA). Contributes to the regulation of the axonal release of the neurotransmitter dopamine. Reduced KCNA2 expression plays a role in the perception of neuropathic pain after peripheral nerve injury, but not acute pain. Plays a role in the regulation of the time spent in non-rapid eye movement (NREM) sleep. The chain is Potassium voltage-gated channel subfamily A member 2 (Kcna2) from Mus musculus (Mouse).